Here is a 482-residue protein sequence, read N- to C-terminus: MAATVAVDNLNPKVLKCEYAVRGEIVIHAQRLQEQLKTQPGSLPFDEILYCNIGNPQSLGQQPVTFFREVLALCDHPDLLQREEIKTLFSADSISRAKQILAMIPGRATGAYSHSQGIKGLRDAIASGIASRDGFPANADDIFLTDGASPGVHLMMQLLIRNEKDGILVPIPQYPLYSASIALHGGALVPYYLNESTGWGLETSDVKKQLEDARSRGINVRALVVINPGNPTGQVLAEENQYDIVKFCKNEGLVLLADEVYQENIYVDNKKFHSFKKIVRSLGYGEEDLPLVSYQSVSKGYYGECGKRGGYFEITGFSAPVREQIYKIASVNLCSNITGQILASLVMNPPKASDESYASYKAEKDGILASLARRAKALEHAFNKLEGITCNEAEGAMYVFPQICLPQKAIEAAKAANKAPDAFYALRLLESTGIVVVPGSGFGQVPGTWHFRCTILPQEDKIPAVISRFTVFHEAFMSEYRD.

At Lys299 the chain carries N6-(pyridoxal phosphate)lysine.

This sequence belongs to the class-I pyridoxal-phosphate-dependent aminotransferase family. Alanine aminotransferase subfamily. As to quaternary structure, homodimer. Requires pyridoxal 5'-phosphate as cofactor.

The catalysed reaction is L-alanine + 2-oxoglutarate = pyruvate + L-glutamate. It participates in photosynthesis; C4 acid pathway. It functions in the pathway amino-acid degradation; L-alanine degradation via transaminase pathway; pyruvate from L-alanine: step 1/1. Functionally, transfer of C3 units between the cytosol of mesophyll and bundle sheath cells to maintain a nitrogen-carbon balance in the C4-dicarboxylic pathway. In Hordeum vulgare (Barley), this protein is Alanine aminotransferase 2.